The chain runs to 51 residues: Ovomucoid (51 aa).

Positions 3–51 (IDCSGYPKPACTLEFFPLCGSDNQTYSNKCAFCNAAVEKNVTLNHIGEC) constitute a Kazal-like domain. 3 disulfide bridges follow: Cys-5–Cys-35, Cys-13–Cys-32, and Cys-21–Cys-51. N-linked (GlcNAc...) asparagine glycosylation occurs at Asn-42.

It localises to the secreted. This chain is Ovomucoid, found in Eudromia elegans (Elegant crested-tinamou).